The sequence spans 132 residues: 3-aminoacrylate deaminase RutC (132 aa).

Belongs to the RutC family.

It carries out the reaction (Z)-3-aminoacrylate + H2O + H(+) = 3-oxopropanoate + NH4(+). Its function is as follows. Involved in pyrimidine catabolism. Catalyzes the deamination of 3-aminoacrylate to malonic semialdehyde, a reaction that can also occur spontaneously. RutC may facilitate the reaction and modulate the metabolic fitness, rather than catalyzing essential functions. In Cronobacter sakazakii (strain ATCC BAA-894) (Enterobacter sakazakii), this protein is 3-aminoacrylate deaminase RutC.